Consider the following 458-residue polypeptide: Ammonium transporter Rh type B (458 aa).

Residues 1–13 are Cytoplasmic-facing; sequence MAGSPSRAAGRRL. A helical transmembrane segment spans residues 14–34; it reads QLPLLCLFLQGATAVLFAVFV. At 35-61 the chain is on the extracellular side; that stretch reads RYNHKTDAALWHRSNHSNADNEFYFRY. N-linked (GlcNAc...) asparagine glycosylation occurs at asparagine 49. The helical transmembrane segment at 62-82 threads the bilayer; sequence PSFQDVHAMVFVGFGFLMVFL. Residues 83 to 86 lie on the Cytoplasmic side of the membrane; the sequence is QRYG. The chain crosses the membrane as a helical span at residues 87-107; that stretch reads FSSVGFTFLLAAFALQWSTLV. Residues 108–124 lie on the Extracellular side of the membrane; it reads QGFLHSFHGGHIHVGVE. The helical transmembrane segment at 125–145 threads the bilayer; that stretch reads SMINADFCAGAVLISFGAVLG. At 146-149 the chain is on the cytoplasmic side; it reads KTGP. A helical transmembrane segment spans residues 150-170; it reads AQLLLMALLEVVLFGINEFVL. At 171 to 178 the chain is on the extracellular side; it reads LHLLGVRD. A helical membrane pass occupies residues 179 to 201; the sequence is AGGSMTIHTFGAYFGLVLSRVLY. Over 202–219 the chain is Cytoplasmic; it reads RPQLEKSKHRQGSVYHSD. A helical membrane pass occupies residues 220 to 240; it reads LFAMIGTIFLWIFWPSFNAAL. The Extracellular segment spans residues 241–251; the sequence is TALGAGQHRTA. The chain crosses the membrane as a helical span at residues 252-272; sequence LNTYYSLAASTLGTFALSALV. Residues 273 to 282 lie on the Cytoplasmic side of the membrane; that stretch reads GEDGRLDMVH. A helical transmembrane segment spans residues 283-303; it reads IQNAALAGGVVVGTSSEMMLT. Residue proline 304 is a topological domain, extracellular. Residues 305–325 form a helical membrane-spanning segment; sequence FGALTAGFLAGTVSTLGYKFF. The Cytoplasmic portion of the chain corresponds to 326–346; sequence RPILESKFKVQDTCGVHNLHG. A helical transmembrane segment spans residues 347-367; sequence MPGVLGALLGVLVAGLATHEA. Residues 368 to 393 lie on the Extracellular side of the membrane; that stretch reads YGDGLESVFPLIAEGQRSATSQAMHQ. Residues 394-414 traverse the membrane as a helical segment; sequence LFGLFVTLMFASVGGGLGGLL. At 415-458 the chain is on the cytoplasmic side; it reads LKLPFLDSPPDSQCYEDQVHWQVPGEHEDKAQRPLRVEEADTQA. The tract at residues 416–424 is interaction with ANK3; it reads KLPFLDSPP. A Basolateral sorting signal motif is present at residues 429–432; sequence YEDQ. Residues 439–458 are disordered; that stretch reads GEHEDKAQRPLRVEEADTQA.

It belongs to the ammonium transporter (TC 2.A.49) family. Rh subfamily. Interacts (via C-terminus) with ANK2 and ANK3; required for targeting to the basolateral membrane. Post-translationally, N-glycosylated.

It is found in the cell membrane. It localises to the basolateral cell membrane. It catalyses the reaction NH4(+)(in) = NH4(+)(out). The catalysed reaction is methylamine(out) = methylamine(in). It carries out the reaction CO2(out) = CO2(in). Ammonium transporter involved in the maintenance of acid-base homeostasis. Transports ammonium and its related derivative methylammonium across the basolateral plasma membrane of epithelial cells likely contributing to renal transepithelial ammonia transport and ammonia metabolism. May transport either NH4(+) or NH3 ammonia species predominantly mediating an electrogenic NH4(+) transport. May act as a CO2 channel providing for renal acid secretion. The sequence is that of Ammonium transporter Rh type B (RHBG) from Pan troglodytes (Chimpanzee).